The sequence spans 249 residues: Pyridoxine 5'-phosphate synthase (249 aa).

N7 provides a ligand contact to 3-amino-2-oxopropyl phosphate. 9 to 10 (DH) contributes to the 1-deoxy-D-xylulose 5-phosphate binding site. R18 contacts 3-amino-2-oxopropyl phosphate. Residue H43 is the Proton acceptor of the active site. 1-deoxy-D-xylulose 5-phosphate-binding residues include R45 and H50. E70 (proton acceptor) is an active-site residue. T100 is a binding site for 1-deoxy-D-xylulose 5-phosphate. The Proton donor role is filled by H190. 3-amino-2-oxopropyl phosphate contacts are provided by residues G191 and 212–213 (GH).

It belongs to the PNP synthase family. As to quaternary structure, homooctamer; tetramer of dimers.

The protein resides in the cytoplasm. The catalysed reaction is 3-amino-2-oxopropyl phosphate + 1-deoxy-D-xylulose 5-phosphate = pyridoxine 5'-phosphate + phosphate + 2 H2O + H(+). The protein operates within cofactor biosynthesis; pyridoxine 5'-phosphate biosynthesis; pyridoxine 5'-phosphate from D-erythrose 4-phosphate: step 5/5. Functionally, catalyzes the complicated ring closure reaction between the two acyclic compounds 1-deoxy-D-xylulose-5-phosphate (DXP) and 3-amino-2-oxopropyl phosphate (1-amino-acetone-3-phosphate or AAP) to form pyridoxine 5'-phosphate (PNP) and inorganic phosphate. This is Pyridoxine 5'-phosphate synthase from Synechococcus sp. (strain CC9605).